The following is a 438-amino-acid chain: MSTKTVPYTAYKVKDIELAEYGRREIELAEAEMPGLMALRKEYGASKPLKGARIAGCLHMTIQTAVLIETLVELGANVTWSSCNIFSTQDHAAAAIAAAGIPVYAWKGLTEEEFNWCIEQTLFFGEDRKPLNMILDDGGDLTNMVLDEYPELAEGIKGLSEETTTGVHRLYERMKKGTLPMPAINVNDSVTKSKFDNKYGCRESAVDAIRRATDVMLAGKRVVVCGYGDVGKGTAQSFKGAGSIVTVTEIDPICALQAAMDGFEVKQLETVLPKADIVITTTGNKDIVRPEHFEAMKDKTIVANIGHFDNEIAVSWLNEKHGDSKVEIKPQVDKYTINGKDIILLAEGRLVNLGCATGHPSFVMSNSFTNQTLAQIELWKNTDEYKNEVYMLPKHLDEKVAKLHLERIGVELTELKQDQAEYIGVTVEGPYKPEYYRY.

Residues Thr61, Asp137, and Glu162 each coordinate substrate. Position 163 to 165 (163 to 165) interacts with NAD(+); the sequence is TTT. Residues Lys192 and Asp196 each coordinate substrate. NAD(+) contacts are provided by residues Asn197, 226-231, Glu249, Asn284, 305-307, and Asn352; these read GYGDVG and IGH.

The protein belongs to the adenosylhomocysteinase family. The cofactor is NAD(+).

The protein localises to the cytoplasm. It carries out the reaction S-adenosyl-L-homocysteine + H2O = L-homocysteine + adenosine. It functions in the pathway amino-acid biosynthesis; L-homocysteine biosynthesis; L-homocysteine from S-adenosyl-L-homocysteine: step 1/1. In terms of biological role, may play a key role in the regulation of the intracellular concentration of adenosylhomocysteine. This chain is Adenosylhomocysteinase, found in Christiangramia forsetii (strain DSM 17595 / CGMCC 1.15422 / KT0803) (Gramella forsetii).